A 62-amino-acid polypeptide reads, in one-letter code: Amolopin-p-MT1 (62 aa).

An N-terminal signal peptide occupies residues 1-22 (MFTLKKSLLLLFFLGTISLSLC). Positions 23-42 (EQERGADEEENGGEVTEEEV) are cleaved as a propeptide — removed in mature form.

This sequence belongs to the frog skin active peptide (FSAP) family. Brevinin subfamily. In terms of tissue distribution, expressed by the skin glands.

Its subcellular location is the secreted. In terms of biological role, antimicrobial peptide. Active against a variety of Gram-negative and Gram-positive bacterial strains. Not active against fungi. Shows weak hemolytic activity against human erythrocytes. This Amolops mantzorum (Sichuan torrent frog) protein is Amolopin-p-MT1.